The sequence spans 652 residues: Acetyl-coenzyme A synthetase (652 aa).

Residues 190–193 (RGGR) and Thr310 contribute to the CoA site. ATP-binding positions include 386–388 (GEP), 410–415 (DTWWQT), Asp499, and Arg514. CoA is bound at residue Ser522. Residue Arg525 participates in ATP binding. Positions 536, 538, and 541 each coordinate Mg(2+). Arg583 lines the CoA pocket. Position 608 is an N6-acetyllysine (Lys608).

Belongs to the ATP-dependent AMP-binding enzyme family. The cofactor is Mg(2+). Acetylated. Deacetylation by the SIR2-homolog deacetylase activates the enzyme.

The catalysed reaction is acetate + ATP + CoA = acetyl-CoA + AMP + diphosphate. In terms of biological role, catalyzes the conversion of acetate into acetyl-CoA (AcCoA), an essential intermediate at the junction of anabolic and catabolic pathways. AcsA undergoes a two-step reaction. In the first half reaction, AcsA combines acetate with ATP to form acetyl-adenylate (AcAMP) intermediate. In the second half reaction, it can then transfer the acetyl group from AcAMP to the sulfhydryl group of CoA, forming the product AcCoA. The polypeptide is Acetyl-coenzyme A synthetase (Methylorubrum extorquens (strain CM4 / NCIMB 13688) (Methylobacterium extorquens)).